A 202-amino-acid chain; its full sequence is T-cell surface glycoprotein CD3 epsilon chain (202 aa).

Positions 1–21 (MPSGSLWRVLGLCLLSVGAWG) are cleaved as a signal peptide. The Extracellular segment spans residues 22 to 125 (QEDNEDPLEP…NCVEVDTMTA (104 aa)). Positions 33–107 (PQTSASARYK…TSNSLEKNYL (75 aa)) constitute an Ig-like domain. Residues C54 and C96 are joined by a disulfide bond. Residues 126–146 (VAIVVADVCITLGFLLLVYYW) form a helical membrane-spanning segment. At 147–202 (SKNKKASSVTMMRGPGAGGRPRGQNKEKPPPVPNPDYEPIRKGQQDLYSGLNQRGI) the chain is on the cytoplasmic side. The disordered stretch occupies residues 156–202 (TMMRGPGAGGRPRGQNKEKPPPVPNPDYEPIRKGQQDLYSGLNQRGI). Positions 170-187 (QNKEKPPPVPNPDYEPIR) are NUMB-binding region. An ITAM domain is found at 173–200 (EKPPPVPNPDYEPIRKGQQDLYSGLNQR). Residues 174–181 (KPPPVPNP) form a proline-rich sequence region. Y183 and Y194 each carry phosphotyrosine. Residues 192-202 (DLYSGLNQRGI) show a composition bias toward polar residues.

In terms of assembly, the TCR-CD3 complex is composed of a CD3D/CD3E and a CD3G/CD3E heterodimers that preferentially associate with TCRalpha and TCRbeta, respectively, to form TCRalpha/CD3E/CD3G and TCRbeta/CD3G/CD3E trimers. In turn, the hexamer interacts with CD3Z homodimer to form the TCR-CD3 complex. Alternatively, TCRalpha and TCRbeta can be replaced by TCRgamma and TCRdelta. Interacts with CD6. Interacts (via Proline-rich sequence) with NCK1; the interaction is ligand dependent but independent of tyrosine kinase activation. Post-translationally, phosphorylated on Tyr residues after T-cell receptor triggering by LCK in association with CD4/CD8.

The protein localises to the cell membrane. Its function is as follows. Part of the TCR-CD3 complex present on T-lymphocyte cell surface that plays an essential role in adaptive immune response. When antigen presenting cells (APCs) activate T-cell receptor (TCR), TCR-mediated signals are transmitted across the cell membrane by the CD3 chains CD3D, CD3E, CD3G and CD3Z. All CD3 chains contain immunoreceptor tyrosine-based activation motifs (ITAMs) in their cytoplasmic domain. Upon TCR engagement, these motifs become phosphorylated by Src family protein tyrosine kinases LCK and FYN, resulting in the activation of downstream signaling pathways. In addition of this role of signal transduction in T-cell activation, CD3E plays an essential role in correct T-cell development. Also participates in internalization and cell surface down-regulation of TCR-CD3 complexes via endocytosis sequences present in CD3E cytosolic region. In addition to its role as a TCR coreceptor, it serves as a receptor for ITPRIPL1. Ligand recognition inhibits T-cell activation by promoting interaction with NCK1, which prevents CD3E-ZAP70 interaction and blocks the ERK-NFkB signaling cascade and calcium influx. This Felis catus (Cat) protein is T-cell surface glycoprotein CD3 epsilon chain (CD3E).